Consider the following 1188-residue polypeptide: MDFPRGLLVAWTLSLWPGFTDTFNMDTRNPRVIAGPSAAFFGYTVQQHDISGKKWLVVGAPMETNGHQKTGDVYKCPVTQGNCTKLNLGRVTLSNVSERKDNMRLGLSLATNPKDNSFLACSPLWSHECGSSYYTTGMCSRANSNFRFSKTVAPALQRCQTYMDIVIVLDGSNSIYPWVEVQHFLINILKKFYIGPGQIQVGIVQYGEDAVHEFHLNDYRSVKDVVEAASHIEQRGGTETRTAFGIEFARSEAFQKGGRKGAKKVMIVITDGESHDSPDLEKVIRQSEKDNVTRYAVAVLGYYNRRGINPETFLNEIKYIASDPDDKHFFNVTDEAALKDIVDALGDRIFSLEGTNKNETSFGLEMSQTGFSSHVVEDGILLGAVGAYDWNGAVLKETSAGKVIPHRESYLKEFPEELKNHAAYLGYTVTSVVSSRQGRVYVAGAPRFNHTGKVILFSMHNNRSLTIHQALRGEQIGSYFGSEITSVDVNDDRVTDVLLVGAPMYFSEGRERGKVYVYNLRQNRFVYNGTLKDSHSYQNARFGSCIASVQDLNQDSYNDVVVGAPLEDSHRGAIYIFHGFQTNILKKPMQRITASELAPGLQHFGCSIHGQLDLNEDGLVDLAVGALGNAVVLWARPVVQINASLHFEPSKINIFHKDCKRNGRDATCLAAFLCFIPIFLAPHFQTATVGIRYNATMDERRYMPRAHLDEGGDQFTNRAVLLSSGQEHCQRINFHVLDTADYVKPVAFSVEYSLEDPDNGPMLDNGWPTTLRVSVPFWNGCNEDEHCVPDLVLDARSDLPTAMEYCQRVLGRPAQDCSSYTLSFDTTVFIIESTRRRVAVEATLENRGENAYSAVLNISQSENLQFASLIQKDDSDNSIECVNEERRLHKKVCNVSYPFFRAKAKVAFRLDFEFSKSVFLHHLQIHLGAGSDSHEQDSTADDNTALLRFHLKYEADVLFTRSSSLSHFEVKANSSLESYDGIGPPFNCVFKVQNLGFFPIHGVMMKITVPIATRGGNRLLMLRDFFTDQGNTSCNIWGNSTEYRSTPTEEDLSHAPQRNHSNSDVVSIICNLRLAPSQETSFYLVGNLWLTSLKALKYRSLKITVNAALQRQFHSPFIFREEDPSRQVTFEISKQEDWQVPIWIIVGSTLGGLLLLALLVLALWKLGFFKSAKRKREPGLGPIPKELK.

The N-terminal stretch at 1–22 (MDFPRGLLVAWTLSLWPGFTDT) is a signal peptide. Over 23 to 1141 (FNMDTRNPRV…ISKQEDWQVP (1119 aa)) the chain is Extracellular. 2 FG-GAP repeats span residues 24–85 (NMDT…NCTK) and 91–151 (VTLS…FSKT). Cys76 and Cys83 are disulfide-bonded. N-linked (GlcNAc...) asparagine glycans are attached at residues Asn82 and Asn95. Disulfide bonds link Cys121–Cys139 and Cys129–Cys159. The VWFA domain maps to 164–345 (DIVIVLDGSN…AALKDIVDAL (182 aa)). Asn291, Asn331, Asn358, Asn449, and Asn462 each carry an N-linked (GlcNAc...) asparagine glycan. FG-GAP repeat units lie at residues 355–406 (TNKN…VIPH), 411–461 (LKEF…SMHN), 462–527 (NRSL…RFVY), 528–586 (NGTL…NILK), and 590–650 (QRIT…FEPS). Positions 488, 490, 492, and 496 each coordinate Ca(2+). Asn528 carries an N-linked (GlcNAc...) asparagine glycan. Asp551, Asn553, Asp555, Asp559, Asp613, Asn615, Asp617, and Asp621 together coordinate Ca(2+). N-linked (GlcNAc...) asparagine glycosylation occurs at Asn642. 3 disulfides stabilise this stretch: Cys659/Cys668, Cys674/Cys729, and Cys781/Cys787. Residue Asn694 is glycosylated (N-linked (GlcNAc...) asparagine). N-linked (GlcNAc...) asparagine glycosylation occurs at Asn857. Cysteines 881 and 893 form a disulfide. 5 N-linked (GlcNAc...) asparagine glycosylation sites follow: Asn894, Asn973, Asn1031, Asn1039, and Asn1059. A helical membrane pass occupies residues 1142–1164 (IWIIVGSTLGGLLLLALLVLALW). Residues 1165–1188 (KLGFFKSAKRKREPGLGPIPKELK) are Cytoplasmic-facing.

This sequence belongs to the integrin alpha chain family. As to quaternary structure, heterodimer of an alpha and a beta subunit. Alpha-11 associates with beta-1. Interacts with RAB21.

It is found in the membrane. Integrin alpha-11/beta-1 is a receptor for collagen. In Mus musculus (Mouse), this protein is Integrin alpha-11 (Itga11).